Consider the following 367-residue polypeptide: Pectate trisaccharide-lyase (367 aa).

Positions 1–27 are cleaved as a signal peptide; it reads MLMRFSRVVSLVLLLVFTAVLTGAVKA. The Ca(2+) site is built by D144, D166, and D170. The PbH1 1 repeat unit spans residues 151 to 173; that stretch reads SHHIWIDHCTFVNGNDGAVDIKK. Residue R224 is part of the active site. The stretch at 263 to 289 is one PbH1 2 repeat; it reads GAKVHVEGNYFMGYGAVMAEAGIAFLP.

Belongs to the polysaccharide lyase 1 family. As to quaternary structure, homotetramer. It depends on Ca(2+) as a cofactor.

It is found in the secreted. The catalysed reaction is eliminative cleavage of unsaturated trigalacturonate as the major product from the reducing end of polygalacturonic acid/pectate.. With respect to regulation, completely inactivated by EGTA. Cleaves unsaturated trigalacturonate from pectin. Activity is highest towards polygalacturonic acid, activity on methylated pectins decreases with an increasing degree of methylation. This chain is Pectate trisaccharide-lyase, found in Thermotoga maritima (strain ATCC 43589 / DSM 3109 / JCM 10099 / NBRC 100826 / MSB8).